The sequence spans 712 residues: Transcriptional regulator GZF3 (712 aa).

Positions 1–13 (MSMSDIQQRPQIP) are enriched in polar residues. 5 disordered regions span residues 1–20 (MSMS…TAAV), 27–135 (NVNT…GPVC), 173–280 (SLKT…HHHL), 377–533 (DVSS…GNNF), and 596–712 (LNNN…KVKI). Composition is skewed to low complexity over residues 27–84 (NVNT…EQSS) and 107–131 (PKTG…ISMS). A GATA-type zinc finger spans residues 135 to 159 (CGNCQTQTTPLWRRDETGQVLCNAC). Over residues 186-199 (KQNGSNSQSSKSSG) the composition is skewed to low complexity. The span at 213–223 (GKKSPKSKKKS) shows a compositional bias: basic residues. Residues 246-261 (ATSNNTPTFKSTTSQS) are compositionally biased toward polar residues. Residues 268–280 (NHHHQHHNHHHHL) show a composition bias toward basic residues. Residues 379–414 (SSINGSSTSLSSSSASSSIFSSVAPSTSSSSSLSNG) show a composition bias toward low complexity. Composition is skewed to polar residues over residues 429–447 (SKIS…TPLQ) and 484–498 (QQSM…RSPI). 2 stretches are compositionally biased toward low complexity: residues 499-532 (NGNQ…NGNN) and 596-616 (LNNN…QPQQ). The stretch at 545 to 598 (TRISELELVNDLYRTRIMELEAMEQAARLRENSMKKRLDEVMNLQINYQNLLNN) forms a coiled coil. A compositionally biased stretch (polar residues) spans 631–667 (DQGSQSISPNVSITGSTTITSPNSRSKIISETTPTHH).

The protein localises to the nucleus. Its function is as follows. Probable transcription factor involved in response to fluconazole, LiCl, and copper. The polypeptide is Transcriptional regulator GZF3 (GZF3) (Candida albicans (strain SC5314 / ATCC MYA-2876) (Yeast)).